We begin with the raw amino-acid sequence, 250 residues long: Small ribosomal subunit protein uS2 (250 aa).

The segment at Gly225 to Ala250 is disordered.

Belongs to the universal ribosomal protein uS2 family.

This Rhizorhabdus wittichii (strain DSM 6014 / CCUG 31198 / JCM 15750 / NBRC 105917 / EY 4224 / RW1) (Sphingomonas wittichii) protein is Small ribosomal subunit protein uS2.